The following is a 193-amino-acid chain: uncharacterized protein (193 aa).

R8 is a substrate binding site. H9 acts as the Tele-phosphohistidine intermediate in catalysis. Substrate is bound by residues N15, Q21, and R58. Catalysis depends on E82, which acts as the Proton donor/acceptor. H139 serves as a coordination point for substrate.

This sequence belongs to the phosphoglycerate mutase family. GpmB subfamily.

Its function is as follows. Phosphatase with broad substrate specificity. Does not have phosphoglycerate mutase activity. This is an uncharacterized protein from Bacillus subtilis (strain 168).